A 583-amino-acid polypeptide reads, in one-letter code: Moesin/ezrin/radixin homolog 1 (583 aa).

The FERM domain occupies 11 to 301 (MNVRVTTMDA…GNHELYMRRR (291 aa)). Disordered regions lie at residues 466–518 (TTTP…RTLA) and 539–558 (RDDTMETANDKIHRENVRQG). The span at 476–485 (EEEEDNEEEL) shows a compositional bias: acidic residues. Basic and acidic residues predominate over residues 496 to 518 (DYSKDFDTDEHIKDPVEERRTLA). Position 564 is a phosphothreonine (Thr-564).

Interacts with cytoskeletal actin.

It localises to the cell junction. Its subcellular location is the adherens junction. The protein localises to the cell projection. The protein resides in the microvillus. It is found in the rhabdomere. It localises to the cell membrane. Its subcellular location is the cytoplasm. The protein localises to the cytoskeleton. In terms of biological role, involved in connections of major cytoskeletal structures to the plasma membrane. The polypeptide is Moesin/ezrin/radixin homolog 1 (Aedes aegypti (Yellowfever mosquito)).